We begin with the raw amino-acid sequence, 300 residues long: MSSNQAEGLIIAAHGRHYTVELADGSLRQCFPRGKKNGPAVGDRVRITPQGRDEGAIEAVLPRRNLLFRSDEMRVKQFAANVDQLLIVVAVEPTFADDLTGRSLAGAWSADIEPVIVLNKIDLPNGLDAARARLEPLRRLGVPVIELSAQDHAMVHERLAPRLAGRTSLLLGQSGMGKSTLLNTLVPHAQAATREYSAALDMGRHTTTSTRLYHLPEPGGDLIDSPGFQAFGLQHLNGEQILRGFPEFAPHIEHCRFYNCTHRHEPGCGVLAALQAGQIDAGRYALYLRILDENAAARPY.

The 163-residue stretch at 69–231 folds into the CP-type G domain; the sequence is RSDEMRVKQF…LIDSPGFQAF (163 aa). GTP-binding positions include 119–122 and 172–180; these read NKID and GQSGMGKST. Cys255, Cys260, His262, and Cys268 together coordinate Zn(2+).

The protein belongs to the TRAFAC class YlqF/YawG GTPase family. RsgA subfamily. Monomer. Associates with 30S ribosomal subunit, binds 16S rRNA. Zn(2+) serves as cofactor.

Its subcellular location is the cytoplasm. In terms of biological role, one of several proteins that assist in the late maturation steps of the functional core of the 30S ribosomal subunit. Helps release RbfA from mature subunits. May play a role in the assembly of ribosomal proteins into the subunit. Circularly permuted GTPase that catalyzes slow GTP hydrolysis, GTPase activity is stimulated by the 30S ribosomal subunit. The chain is Small ribosomal subunit biogenesis GTPase RsgA from Bordetella bronchiseptica (strain ATCC BAA-588 / NCTC 13252 / RB50) (Alcaligenes bronchisepticus).